Reading from the N-terminus, the 111-residue chain is Protein IDA-LIKE 5 (111 aa).

An N-terminal signal peptide occupies residues 1 to 27; the sequence is MGNKRIKAMMILVVMIMMVFSWRICEA. Residues 46-56 show a composition bias toward basic residues; sequence RRPNPRNHHHQ. Positions 46-65 are disordered; it reads RRPNPRNHHHQNQGFNGDDY.

As to expression, expressed mainly in flowers. Lower levels in buds and seedlings. Detected in vascular tissues and in hydathodes.

The protein localises to the secreted. It localises to the extracellular space. Functionally, may be involved in floral abscission. This is Protein IDA-LIKE 5 (IDL5) from Arabidopsis thaliana (Mouse-ear cress).